Consider the following 716-residue polypeptide: Epidermal growth factor receptor kinase substrate 8-like protein 1 (716 aa).

The PTB domain maps to 35–164 (QYHVNHLVTF…LQNYRSGRGE (130 aa)). Disordered stretches follow at residues 175-194 (EELRRGASPAAETPPLQRRP), 203-249 (VEPS…GPEL), 404-472 (PGVE…ETES), 528-582 (YNIL…SLDP), and 600-628 (SRLAQGRSGPSRVTPGPRAQEPQLSPRSE). Position 182 is a phosphoserine (Ser182). Position 187 is a phosphothreonine (Thr187). Basic and acidic residues predominate over residues 435–446 (PWEDPVEKQLQH). Over residues 453-464 (QSAPQVAVNGQQ) the composition is skewed to polar residues. The 60-residue stretch at 477–536 (KARKWVLCNYDFQARNGSELSVKHRDVLEVLDDRRKWWKVRDHQGQEGYVPYNILTPHPG) folds into the SH3 domain. Residues 553–563 (TPPPPPAPAPA) show a composition bias toward pro residues. Positions 682–713 (VQRALLEDREKVSELEAVMEKQKKKVEGETKT) form a coiled coil.

Belongs to the EPS8 family. In terms of assembly, interacts with ABI1. Part of a complex that contains SOS1, ABI1 and EPS8L2. Associates with F-actin. In terms of tissue distribution, detected in placenta, skin, mammary gland, bone marrow and stomach.

It is found in the cytoplasm. Functionally, stimulates guanine exchange activity of SOS1. May play a role in membrane ruffling and remodeling of the actin cytoskeleton. The protein is Epidermal growth factor receptor kinase substrate 8-like protein 1 (Eps8l1) of Mus musculus (Mouse).